The chain runs to 302 residues: Oxygen-dependent coproporphyrinogen-III oxidase (302 aa).

Residue serine 94 coordinates substrate. The a divalent metal cation site is built by histidine 98 and histidine 108. Histidine 108 functions as the Proton donor in the catalytic mechanism. Residue asparagine 110 to arginine 112 participates in substrate binding. 2 residues coordinate a divalent metal cation: histidine 147 and histidine 177. The tract at residues tyrosine 242–glutamine 277 is important for dimerization. Glycine 260 to arginine 262 is a binding site for substrate.

The protein belongs to the aerobic coproporphyrinogen-III oxidase family. In terms of assembly, homodimer. It depends on a divalent metal cation as a cofactor.

The protein localises to the cytoplasm. The catalysed reaction is coproporphyrinogen III + O2 + 2 H(+) = protoporphyrinogen IX + 2 CO2 + 2 H2O. It participates in porphyrin-containing compound metabolism; protoporphyrin-IX biosynthesis; protoporphyrinogen-IX from coproporphyrinogen-III (O2 route): step 1/1. Functionally, involved in the heme biosynthesis. Catalyzes the aerobic oxidative decarboxylation of propionate groups of rings A and B of coproporphyrinogen-III to yield the vinyl groups in protoporphyrinogen-IX. This chain is Oxygen-dependent coproporphyrinogen-III oxidase, found in Shewanella oneidensis (strain ATCC 700550 / JCM 31522 / CIP 106686 / LMG 19005 / NCIMB 14063 / MR-1).